We begin with the raw amino-acid sequence, 258 residues long: Probable pectin methylesterase CGR3 (258 aa).

The Cytoplasmic portion of the chain corresponds to 1–29 (MSRRQVRRVGDSGSFPFVGALHSKSRSSP). A helical transmembrane segment spans residues 30–50 (LLSVCLVLVGACLLIGYAYSG). Residues 51–258 (PGMFKSIREV…CQVFHLKPLH (208 aa)) are Lumenal-facing. An N-linked (GlcNAc...) asparagine glycan is attached at Asn171.

It belongs to the class I-like SAM-binding methyltransferase superfamily.

The protein localises to the golgi apparatus membrane. Its function is as follows. Together with CGR2, required for homogalacturonan pectins (HG) methylesterification in the Golgi apparatus prior to integration into cell walls, essential for general growth and development. Promotes petiole elongation. Impacts photosynthesis and respiration efficiency by influencing leaf mesophyll morphology and physiology; pectin methylesterification modulates both expansion and positioning of cells in leaves, probably by changing cell walls plasticity. The chain is Probable pectin methylesterase CGR3 from Arabidopsis thaliana (Mouse-ear cress).